Consider the following 68-residue polypeptide: Beta-defensin 1 (68 aa).

Residues 1–21 form the signal peptide; that stretch reads MRTSYLLLFTLCLLLSEMASG. A propeptide spanning residues 22–32 is cleaved from the precursor; sequence GNFLTGLGHRS. 3 disulfides stabilise this stretch: Cys37–Cys66, Cys44–Cys59, and Cys49–Cys67.

The protein belongs to the beta-defensin family. Monomer. Homodimer.

The protein localises to the secreted. It is found in the membrane. Has bactericidal activity. May act as a ligand for C-C chemokine receptor CCR6. Positively regulates the sperm motility and bactericidal activity in a CCR6-dependent manner. Binds to CCR6 and triggers Ca2+ mobilization in the sperm which is important for its motility. This is Beta-defensin 1 (DEFB1) from Pan troglodytes (Chimpanzee).